Consider the following 466-residue polypeptide: Glucose-6-phosphate 1-dehydrogenase 1 (466 aa).

NADP(+) contacts are provided by residues Ser-48, 88–89 (DV), and Lys-141. His-171, Lys-175, Glu-209, and Asp-228 together coordinate substrate. The Proton acceptor role is filled by His-233. Residues Lys-319 and Lys-324 each contribute to the substrate site.

It belongs to the glucose-6-phosphate dehydrogenase family.

The catalysed reaction is D-glucose 6-phosphate + NADP(+) = 6-phospho-D-glucono-1,5-lactone + NADPH + H(+). It participates in carbohydrate degradation; pentose phosphate pathway; D-ribulose 5-phosphate from D-glucose 6-phosphate (oxidative stage): step 1/3. Catalyzes the oxidation of glucose 6-phosphate to 6-phosphogluconolactone. This chain is Glucose-6-phosphate 1-dehydrogenase 1, found in Mycobacterium tuberculosis (strain CDC 1551 / Oshkosh).